The primary structure comprises 485 residues: Bifunctional protein GlmU (485 aa).

A pyrophosphorylase region spans residues 1 to 241 (MSASDFSSAV…ARELAGVNDR (241 aa)). UDP-N-acetyl-alpha-D-glucosamine contacts are provided by residues 13 to 16 (LAAG), Lys27, Gln84, and 89 to 90 (GT). Position 114 (Asp114) interacts with Mg(2+). 4 residues coordinate UDP-N-acetyl-alpha-D-glucosamine: Gly151, Glu166, Asn181, and Asn239. Mg(2+) is bound at residue Asn239. The linker stretch occupies residues 242–262 (VQLAEAGAELNRRTVIAAMRG). An N-acetyltransferase region spans residues 263–485 (GATIVDPATT…AAQNVHNQEG (223 aa)). UDP-N-acetyl-alpha-D-glucosamine contacts are provided by Arg344 and Lys362. The active-site Proton acceptor is the His374. 2 residues coordinate UDP-N-acetyl-alpha-D-glucosamine: Tyr377 and Asn388. Residues Ala391, 397–398 (NY), Ser416, and Ala434 contribute to the acetyl-CoA site. Residues 465–485 (RPGTAAAQAAEAAQNVHNQEG) are disordered. Over residues 469 to 478 (AAAQAAEAAQ) the composition is skewed to low complexity.

It in the N-terminal section; belongs to the N-acetylglucosamine-1-phosphate uridyltransferase family. The protein in the C-terminal section; belongs to the transferase hexapeptide repeat family. Homotrimer. Mg(2+) is required as a cofactor.

Its subcellular location is the cytoplasm. It catalyses the reaction alpha-D-glucosamine 1-phosphate + acetyl-CoA = N-acetyl-alpha-D-glucosamine 1-phosphate + CoA + H(+). The catalysed reaction is N-acetyl-alpha-D-glucosamine 1-phosphate + UTP + H(+) = UDP-N-acetyl-alpha-D-glucosamine + diphosphate. It functions in the pathway nucleotide-sugar biosynthesis; UDP-N-acetyl-alpha-D-glucosamine biosynthesis; N-acetyl-alpha-D-glucosamine 1-phosphate from alpha-D-glucosamine 6-phosphate (route II): step 2/2. It participates in nucleotide-sugar biosynthesis; UDP-N-acetyl-alpha-D-glucosamine biosynthesis; UDP-N-acetyl-alpha-D-glucosamine from N-acetyl-alpha-D-glucosamine 1-phosphate: step 1/1. Its pathway is bacterial outer membrane biogenesis; LPS lipid A biosynthesis. In terms of biological role, catalyzes the last two sequential reactions in the de novo biosynthetic pathway for UDP-N-acetylglucosamine (UDP-GlcNAc). The C-terminal domain catalyzes the transfer of acetyl group from acetyl coenzyme A to glucosamine-1-phosphate (GlcN-1-P) to produce N-acetylglucosamine-1-phosphate (GlcNAc-1-P), which is converted into UDP-GlcNAc by the transfer of uridine 5-monophosphate (from uridine 5-triphosphate), a reaction catalyzed by the N-terminal domain. This is Bifunctional protein GlmU from Corynebacterium glutamicum (strain ATCC 13032 / DSM 20300 / JCM 1318 / BCRC 11384 / CCUG 27702 / LMG 3730 / NBRC 12168 / NCIMB 10025 / NRRL B-2784 / 534).